A 339-amino-acid chain; its full sequence is Phenylalanine--tRNA ligase alpha subunit (339 aa).

E254 serves as a coordination point for Mg(2+).

Belongs to the class-II aminoacyl-tRNA synthetase family. Phe-tRNA synthetase alpha subunit type 1 subfamily. As to quaternary structure, tetramer of two alpha and two beta subunits. It depends on Mg(2+) as a cofactor.

It is found in the cytoplasm. The catalysed reaction is tRNA(Phe) + L-phenylalanine + ATP = L-phenylalanyl-tRNA(Phe) + AMP + diphosphate + H(+). The polypeptide is Phenylalanine--tRNA ligase alpha subunit (Clostridium perfringens (strain SM101 / Type A)).